Consider the following 191-residue polypeptide: Ribosomal RNA small subunit methyltransferase G (191 aa).

Residues Gly62, Phe67, 111–112 (IE), and Arg124 contribute to the S-adenosyl-L-methionine site.

Belongs to the methyltransferase superfamily. RNA methyltransferase RsmG family.

It is found in the cytoplasm. The catalysed reaction is guanosine(527) in 16S rRNA + S-adenosyl-L-methionine = N(7)-methylguanosine(527) in 16S rRNA + S-adenosyl-L-homocysteine. Functionally, specifically methylates the N7 position of guanine in position 527 of 16S rRNA. The polypeptide is Ribosomal RNA small subunit methyltransferase G (Rickettsia prowazekii (strain Madrid E)).